A 426-amino-acid chain; its full sequence is Histidine--tRNA ligase (426 aa).

This sequence belongs to the class-II aminoacyl-tRNA synthetase family. In terms of assembly, homodimer.

It localises to the cytoplasm. It carries out the reaction tRNA(His) + L-histidine + ATP = L-histidyl-tRNA(His) + AMP + diphosphate + H(+). The polypeptide is Histidine--tRNA ligase (Prochlorococcus marinus (strain MIT 9301)).